Here is a 443-residue protein sequence, read N- to C-terminus: Trigger factor (443 aa).

One can recognise a PPIase FKBP-type domain in the interval 168 to 254; the sequence is GDFVTIDFEG…IKNLKEKKLP (87 aa).

This sequence belongs to the FKBP-type PPIase family. Tig subfamily.

The protein resides in the cytoplasm. The enzyme catalyses [protein]-peptidylproline (omega=180) = [protein]-peptidylproline (omega=0). In terms of biological role, involved in protein export. Acts as a chaperone by maintaining the newly synthesized protein in an open conformation. Functions as a peptidyl-prolyl cis-trans isomerase. The polypeptide is Trigger factor (Syntrophus aciditrophicus (strain SB)).